The following is a 302-amino-acid chain: Transcription factor bHLH7 (302 aa).

Residues 124 to 154 (QPMSQPAPPMPHQQSTIRPRVRARRGQATDP) are disordered. The bHLH domain maps to 150–199 (QATDPHSIAERLRRERIAERIRSLQELVPTVNKTDRAAMIDEIVDYVKFL).

In terms of assembly, homodimer. As to expression, expressed constitutively in roots, leaves, stems and flowers.

The protein resides in the nucleus. The sequence is that of Transcription factor bHLH7 (BHLH7) from Arabidopsis thaliana (Mouse-ear cress).